The following is a 296-amino-acid chain: D-alanine--D-alanine ligase (296 aa).

The 191-residue stretch at 103-293 folds into the ATP-grasp domain; that stretch reads KEILMHHRMP…FDSFVKRIIE (191 aa). 129-180 contacts ATP; sequence ISFPVAVKPSSGGSSIATFKVKSIQELKHAYEEASKYGEVMIEQWVTGKEIT. Mg(2+) contacts are provided by aspartate 247, glutamate 260, and asparagine 262.

This sequence belongs to the D-alanine--D-alanine ligase family. It depends on Mg(2+) as a cofactor. The cofactor is Mn(2+).

The protein localises to the cytoplasm. It carries out the reaction 2 D-alanine + ATP = D-alanyl-D-alanine + ADP + phosphate + H(+). It participates in cell wall biogenesis; peptidoglycan biosynthesis. Functionally, cell wall formation. In Francisella tularensis subsp. novicida (strain U112), this protein is D-alanine--D-alanine ligase.